A 156-amino-acid chain; its full sequence is MPRKGPVPRREVLPDPIYNSRLASRFVNRLMYDGKKGVAEKIFYGALENLSEKTGEEPLRAFERALDNVKPQFEVKARRVGGATYQVPMEVRSDRQISLSIRWLITYARSRGEKGMVNKLAAEFLDAFNNRGGAVKKKEDTHRMAEANKAFAHYRW.

It belongs to the universal ribosomal protein uS7 family. As to quaternary structure, part of the 30S ribosomal subunit. Contacts proteins S9 and S11.

In terms of biological role, one of the primary rRNA binding proteins, it binds directly to 16S rRNA where it nucleates assembly of the head domain of the 30S subunit. Is located at the subunit interface close to the decoding center, probably blocks exit of the E-site tRNA. The protein is Small ribosomal subunit protein uS7 of Lawsonia intracellularis (strain PHE/MN1-00).